The primary structure comprises 508 residues: Matrix metalloproteinase-19 (508 aa).

An N-terminal signal peptide occupies residues 1 to 18; sequence MNCQQLWLGFLLPMTVSG. Positions 19–97 are excised as a propeptide; it reads RVLGLAEVAP…EDPFNQKTLK (79 aa). A Cysteine switch motif is present at residues 83-90; the sequence is PRCGLEDP. Cys85 and His212 together coordinate Zn(2+). Glu213 is an active-site residue. His216 and His222 together coordinate Zn(2+). Residues 262–288 are disordered; sequence IRDEEEEETELPTVPPVPTEPSPMPDP. Positions 274–287 are enriched in pro residues; sequence TVPPVPTEPSPMPD. Hemopexin repeat units lie at residues 286 to 333, 334 to 380, 381 to 425, and 426 to 472; these read PDPC…WEGL, PGNL…EPNL, DAAL…FTGV, and PNQP…WMHC. A disulfide bridge connects residues Cys289 and Cys472. A glycan (N-linked (GlcNAc...) asparagine) is linked at Asn464.

The protein belongs to the peptidase M10A family. Zn(2+) serves as cofactor. Ca(2+) is required as a cofactor. Activated by autolytic cleavage after Lys-97. Post-translationally, tyrosine phosphorylated by PKDCC/VLK. Expressed in mammary gland, placenta, lung, pancreas, ovary, small intestine, spleen, thymus, prostate, testis colon, heart and blood vessel walls. Not detected in brain and peripheral blood leukocytes. Also expressed in the synovial fluid of normal and rheumatoid patients.

Its subcellular location is the secreted. It is found in the extracellular space. It localises to the extracellular matrix. With respect to regulation, strongly inhibited by TIMP-2, TIMP-3 and TIMP-4, while TIMP-1 is less efficient. Its function is as follows. Endopeptidase that degrades various components of the extracellular matrix, such as aggrecan and cartilage oligomeric matrix protein (comp), during development, haemostasis and pathological conditions (arthritic disease). May also play a role in neovascularization or angiogenesis. Hydrolyzes collagen type IV, laminin, nidogen, nascin-C isoform, fibronectin, and type I gelatin. The polypeptide is Matrix metalloproteinase-19 (MMP19) (Homo sapiens (Human)).